A 38-amino-acid chain; its full sequence is uncharacterized protein (38 aa).

This is an uncharacterized protein from Acidianus two-tailed virus (ATV).